The sequence spans 1373 residues: DNA-directed RNA polymerase subunit beta'' (1373 aa).

Residues Cys220, Cys291, Cys298, and Cys301 each contribute to the Zn(2+) site.

The protein belongs to the RNA polymerase beta' chain family. RpoC2 subfamily. In terms of assembly, in plastids the minimal PEP RNA polymerase catalytic core is composed of four subunits: alpha, beta, beta', and beta''. When a (nuclear-encoded) sigma factor is associated with the core the holoenzyme is formed, which can initiate transcription. Requires Zn(2+) as cofactor.

The protein resides in the plastid. It localises to the chloroplast. It carries out the reaction RNA(n) + a ribonucleoside 5'-triphosphate = RNA(n+1) + diphosphate. In terms of biological role, DNA-dependent RNA polymerase catalyzes the transcription of DNA into RNA using the four ribonucleoside triphosphates as substrates. The protein is DNA-directed RNA polymerase subunit beta'' of Silene latifolia (White campion).